We begin with the raw amino-acid sequence, 343 residues long: Phosphoglycerate mutase-like protein 2 (343 aa).

A chloroplast-targeting transit peptide spans 1-35 (MIHQSMTSNLSFYISSVSHLSSPLPSLSRLSLRCC). His-65 (tele-phosphohistidine intermediate) is an active-site residue. Catalysis depends on Glu-177, which acts as the Proton donor/acceptor. A disordered region spans residues 322–343 (MTNYPGTILTGEDASSDIADQK).

It belongs to the phosphoglycerate mutase family.

The protein localises to the plastid. It localises to the chloroplast. Functionally, may play a role in carbohydrates metabolism. The polypeptide is Phosphoglycerate mutase-like protein 2 (Arabidopsis thaliana (Mouse-ear cress)).